We begin with the raw amino-acid sequence, 292 residues long: MQFQGAFTALVTPFRNGEVDEERYRALVEWQIEQGINGLVPCGTTGESATLTHQEHKDVIRICVEQVKGRVPVLAGAGSNNTREAVELTRYAKQAGADGALLITPYYNKPTQEGLYQHFKAIAAEVPMPFIVYNVPSRTGTNLCPETLARMKRDIPEVIGVKEATGNLIQVSEIIEYCGADFQVLSGDDFTVLPLLAVGGCGVISVSSNVVPAKMSELCRAFFEGDLATARRVHYEIASINRAMFLETNPIPVKTALSMMGRIELELRLPMVPLQPANQSRLRDILSAAGIV.

Thr45 serves as a coordination point for pyruvate. Tyr133 functions as the Proton donor/acceptor in the catalytic mechanism. Lys162 (schiff-base intermediate with substrate) is an active-site residue. Ile204 contacts pyruvate.

Belongs to the DapA family. In terms of assembly, homotetramer; dimer of dimers.

The protein resides in the cytoplasm. It carries out the reaction L-aspartate 4-semialdehyde + pyruvate = (2S,4S)-4-hydroxy-2,3,4,5-tetrahydrodipicolinate + H2O + H(+). It participates in amino-acid biosynthesis; L-lysine biosynthesis via DAP pathway; (S)-tetrahydrodipicolinate from L-aspartate: step 3/4. Catalyzes the condensation of (S)-aspartate-beta-semialdehyde [(S)-ASA] and pyruvate to 4-hydroxy-tetrahydrodipicolinate (HTPA). This Nitratidesulfovibrio vulgaris (strain DSM 19637 / Miyazaki F) (Desulfovibrio vulgaris) protein is 4-hydroxy-tetrahydrodipicolinate synthase.